A 638-amino-acid chain; its full sequence is Threonine--tRNA ligase (638 aa).

Positions 1–61 (MPDIKLPDGS…EQNADLAIIT (61 aa)) constitute a TGS domain. Residues 242 to 533 (DHRRLGKQYD…LIENFAGALP (292 aa)) form a catalytic region. The Zn(2+) site is built by C333, H384, and H510.

It belongs to the class-II aminoacyl-tRNA synthetase family. As to quaternary structure, homodimer. Zn(2+) is required as a cofactor.

It is found in the cytoplasm. The catalysed reaction is tRNA(Thr) + L-threonine + ATP = L-threonyl-tRNA(Thr) + AMP + diphosphate + H(+). In terms of biological role, catalyzes the attachment of threonine to tRNA(Thr) in a two-step reaction: L-threonine is first activated by ATP to form Thr-AMP and then transferred to the acceptor end of tRNA(Thr). Also edits incorrectly charged L-seryl-tRNA(Thr). This Dechloromonas aromatica (strain RCB) protein is Threonine--tRNA ligase.